The chain runs to 100 residues: MKISEAEVRHVAKLSKLEFSDQETAEFATSLSKIVDMVELLNEVDTTGVAVTTTMADRKNVLRADIAQKGESREELFKNVPESQDNFIKVPAILDGGGDA.

It belongs to the GatC family. Heterotrimer of A, B and C subunits.

The enzyme catalyses L-glutamyl-tRNA(Gln) + L-glutamine + ATP + H2O = L-glutaminyl-tRNA(Gln) + L-glutamate + ADP + phosphate + H(+). It catalyses the reaction L-aspartyl-tRNA(Asn) + L-glutamine + ATP + H2O = L-asparaginyl-tRNA(Asn) + L-glutamate + ADP + phosphate + 2 H(+). Allows the formation of correctly charged Asn-tRNA(Asn) or Gln-tRNA(Gln) through the transamidation of misacylated Asp-tRNA(Asn) or Glu-tRNA(Gln) in organisms which lack either or both of asparaginyl-tRNA or glutaminyl-tRNA synthetases. The reaction takes place in the presence of glutamine and ATP through an activated phospho-Asp-tRNA(Asn) or phospho-Glu-tRNA(Gln). The protein is Aspartyl/glutamyl-tRNA(Asn/Gln) amidotransferase subunit C of Streptococcus suis (strain 98HAH33).